Here is a 243-residue protein sequence, read N- to C-terminus: Octanoyltransferase (243 aa).

Positions proline 49 to tryptophan 227 constitute a BPL/LPL catalytic domain. Substrate-binding positions include arginine 91–histidine 98, alanine 158–glycine 160, and glycine 171–alanine 173. Residue cysteine 189 is the Acyl-thioester intermediate of the active site.

The protein belongs to the LipB family.

The protein resides in the cytoplasm. The catalysed reaction is octanoyl-[ACP] + L-lysyl-[protein] = N(6)-octanoyl-L-lysyl-[protein] + holo-[ACP] + H(+). Its pathway is protein modification; protein lipoylation via endogenous pathway; protein N(6)-(lipoyl)lysine from octanoyl-[acyl-carrier-protein]: step 1/2. Catalyzes the transfer of endogenously produced octanoic acid from octanoyl-acyl-carrier-protein onto the lipoyl domains of lipoate-dependent enzymes. Lipoyl-ACP can also act as a substrate although octanoyl-ACP is likely to be the physiological substrate. The polypeptide is Octanoyltransferase (Prochlorococcus marinus (strain MIT 9313)).